We begin with the raw amino-acid sequence, 277 residues long: Pantothenate synthetase (277 aa).

Position 26-33 (methionine 26–histidine 33) interacts with ATP. Histidine 33 (proton donor) is an active-site residue. Glutamine 57 serves as a coordination point for (R)-pantoate. Beta-alanine is bound at residue glutamine 57. Glycine 144–aspartate 147 contacts ATP. Glutamine 150 lines the (R)-pantoate pocket. ATP contacts are provided by residues glycine 173 and leucine 181–arginine 184.

The protein belongs to the pantothenate synthetase family. In terms of assembly, homodimer.

It localises to the cytoplasm. The catalysed reaction is (R)-pantoate + beta-alanine + ATP = (R)-pantothenate + AMP + diphosphate + H(+). It participates in cofactor biosynthesis; (R)-pantothenate biosynthesis; (R)-pantothenate from (R)-pantoate and beta-alanine: step 1/1. Functionally, catalyzes the condensation of pantoate with beta-alanine in an ATP-dependent reaction via a pantoyl-adenylate intermediate. In Laribacter hongkongensis (strain HLHK9), this protein is Pantothenate synthetase.